The chain runs to 483 residues: Probable cytosol aminopeptidase (483 aa).

Residues K245 and D250 each contribute to the Mn(2+) site. The active site involves K257. Mn(2+)-binding residues include D268, D327, and E329. R331 is a catalytic residue.

It belongs to the peptidase M17 family. The cofactor is Mn(2+).

It localises to the cytoplasm. It catalyses the reaction Release of an N-terminal amino acid, Xaa-|-Yaa-, in which Xaa is preferably Leu, but may be other amino acids including Pro although not Arg or Lys, and Yaa may be Pro. Amino acid amides and methyl esters are also readily hydrolyzed, but rates on arylamides are exceedingly low.. It carries out the reaction Release of an N-terminal amino acid, preferentially leucine, but not glutamic or aspartic acids.. Presumably involved in the processing and regular turnover of intracellular proteins. Catalyzes the removal of unsubstituted N-terminal amino acids from various peptides. In Wolinella succinogenes (strain ATCC 29543 / DSM 1740 / CCUG 13145 / JCM 31913 / LMG 7466 / NCTC 11488 / FDC 602W) (Vibrio succinogenes), this protein is Probable cytosol aminopeptidase.